A 388-amino-acid polypeptide reads, in one-letter code: Xylose isomerase (388 aa).

Residues His54 and Asp57 contribute to the active site. The Mg(2+) site is built by Glu181, Glu217, His220, Asp245, Asp255, Asp257, and Asp287.

Belongs to the xylose isomerase family. As to quaternary structure, homotetramer. Mg(2+) is required as a cofactor.

It localises to the cytoplasm. The catalysed reaction is alpha-D-xylose = alpha-D-xylulofuranose. The chain is Xylose isomerase from Streptomyces avermitilis (strain ATCC 31267 / DSM 46492 / JCM 5070 / NBRC 14893 / NCIMB 12804 / NRRL 8165 / MA-4680).